The chain runs to 445 residues: MSGITLPEFVDCVTVEFSAGRGGNGCASVRREKYKPLAGPDGGSGGHGGSIFLKADTSERTLISFRRKGHYSASNGAHGLSRLRNGARGKDLEVSVPCGTSVYDEGGRQIADLVSPGSCLQVVRGGTGGLGNAALAGYRRKTPRFALLGLPGQKRKLRLEVKSIADVALVGFPSVGKSSIISAISSAKPKIADYPFTTLHPNLGVVQSGPYRYTVADVPGLVEGASKGIGLGLNFLRHIERCSVVVHVIDCANTQQDPISGFNLIEKELSEYKVAENAIPLNKRPKVIVLNKIDVLQTKEEQDTLLYLQSVFKKLVTDVYAISAVTRSGLRQFTLRLGEICQEYPSQVQPTSQTILIPAKNTPEFSLDRTDGVYRVTGKKPEKWILQTDFSSDEAISYLAERLDRLGIEDALVRAGATCGDEVEIGGVIFTWDPSVANTSFSLSV.

The Obg domain occupies 7–164 (PEFVDCVTVE…RKLRLEVKSI (158 aa)). The OBG-type G domain occupies 165–342 (ADVALVGFPS…FTLRLGEICQ (178 aa)). Residues 171 to 178 (GFPSVGKS), 196 to 200 (FTTLH), 217 to 220 (DVPG), 291 to 294 (NKID), and 323 to 325 (SAV) each bind GTP. Residues Ser-178 and Thr-198 each contribute to the Mg(2+) site. The OCT domain occupies 357–434 (IPAKNTPEFS…IGGVIFTWDP (78 aa)).

Belongs to the TRAFAC class OBG-HflX-like GTPase superfamily. OBG GTPase family. As to quaternary structure, monomer. Requires Mg(2+) as cofactor.

It is found in the cytoplasm. Functionally, an essential GTPase which binds GTP, GDP and possibly (p)ppGpp with moderate affinity, with high nucleotide exchange rates and a fairly low GTP hydrolysis rate. Plays a role in control of the cell cycle, stress response, ribosome biogenesis and in those bacteria that undergo differentiation, in morphogenesis control. The sequence is that of GTPase Obg from Tropheryma whipplei (strain Twist) (Whipple's bacillus).